Consider the following 248-residue polypeptide: uncharacterized protein (248 aa).

Residues Glu-33–Lys-57 adopt a coiled-coil conformation.

This is an uncharacterized protein from Escherichia coli (strain K12).